Here is a 29-residue protein sequence, read N- to C-terminus: NADH dehydrogenase [ubiquinone] 1 beta subcomplex subunit 10 (29 aa).

The segment at 1 to 29 is disordered; that stretch reads GRKKGVQFDEGAPDDFDPNNPYKKDVAFL.

The protein belongs to the complex I NDUFB10 subunit family. Complex I is composed of about 45 different subunits.

It is found in the mitochondrion inner membrane. Functionally, accessory subunit of the mitochondrial membrane respiratory chain NADH dehydrogenase (Complex I), that is believed not to be involved in catalysis. Complex I functions in the transfer of electrons from NADH to the respiratory chain. The immediate electron acceptor for the enzyme is believed to be ubiquinone. The chain is NADH dehydrogenase [ubiquinone] 1 beta subcomplex subunit 10 from Solanum tuberosum (Potato).